The primary structure comprises 489 residues: Alpha-amylase (489 aa).

The signal sequence occupies residues 1–16; it reads HFKPILVLCLATLALG. An intrachain disulfide couples cysteine 44 to cysteine 102. Residues asparagine 116, arginine 164, and aspartate 173 each coordinate Ca(2+). Cysteine 152 and cysteine 166 are oxidised to a cystine. Arginine 201 is a binding site for chloride. Catalysis depends on aspartate 203, which acts as the Nucleophile. Histidine 207 contributes to the Ca(2+) binding site. Residue glutamate 240 is the Proton donor of the active site. Residues asparagine 303 and arginine 339 each coordinate chloride. 2 cysteine pairs are disulfide-bonded: cysteine 372–cysteine 378 and cysteine 443–cysteine 455.

The protein belongs to the glycosyl hydrolase 13 family. Monomer. It depends on Ca(2+) as a cofactor. The cofactor is chloride.

The enzyme catalyses Endohydrolysis of (1-&gt;4)-alpha-D-glucosidic linkages in polysaccharides containing three or more (1-&gt;4)-alpha-linked D-glucose units.. This chain is Alpha-amylase, found in Tribolium castaneum (Red flour beetle).